The chain runs to 432 residues: 3-phosphoshikimate 1-carboxyvinyltransferase (432 aa).

K23, S24, and R28 together coordinate 3-phosphoshikimate. K23 lines the phosphoenolpyruvate pocket. Phosphoenolpyruvate-binding residues include G95 and R123. Residues S167, Q169, D317, and K344 each coordinate 3-phosphoshikimate. A phosphoenolpyruvate-binding site is contributed by Q169. D317 serves as the catalytic Proton acceptor. Positions 348 and 390 each coordinate phosphoenolpyruvate.

The protein belongs to the EPSP synthase family. Monomer.

Its subcellular location is the cytoplasm. The catalysed reaction is 3-phosphoshikimate + phosphoenolpyruvate = 5-O-(1-carboxyvinyl)-3-phosphoshikimate + phosphate. It participates in metabolic intermediate biosynthesis; chorismate biosynthesis; chorismate from D-erythrose 4-phosphate and phosphoenolpyruvate: step 6/7. Functionally, catalyzes the transfer of the enolpyruvyl moiety of phosphoenolpyruvate (PEP) to the 5-hydroxyl of shikimate-3-phosphate (S3P) to produce enolpyruvyl shikimate-3-phosphate and inorganic phosphate. The polypeptide is 3-phosphoshikimate 1-carboxyvinyltransferase (Staphylococcus aureus (strain Newman)).